The primary structure comprises 150 residues: Small ribosomal subunit protein uS9 (150 aa).

Belongs to the universal ribosomal protein uS9 family.

This is Small ribosomal subunit protein uS9 from Mycolicibacterium smegmatis (strain ATCC 700084 / mc(2)155) (Mycobacterium smegmatis).